A 555-amino-acid polypeptide reads, in one-letter code: Formate--tetrahydrofolate ligase (555 aa).

64–71 (TPAGEGKT) lines the ATP pocket.

It belongs to the formate--tetrahydrofolate ligase family.

It catalyses the reaction (6S)-5,6,7,8-tetrahydrofolate + formate + ATP = (6R)-10-formyltetrahydrofolate + ADP + phosphate. Its pathway is one-carbon metabolism; tetrahydrofolate interconversion. The chain is Formate--tetrahydrofolate ligase from Allorhizobium ampelinum (strain ATCC BAA-846 / DSM 112012 / S4) (Agrobacterium vitis (strain S4)).